A 602-amino-acid polypeptide reads, in one-letter code: MDSRITTILERYRSDRTRLIDILWDVQHEYGHIPDAVLPQLGAGLKLSPLDIRETASFYHFFLDKPSGKYRIYLCNSVIAKINGYQAVREALERETGIRFGETDPNGMFGLFDTPCIGLSDQEPAMLIDKVVFTRLRPGKITDIIAQLKQGRSPAEIANPAGLPSQDIAYVDAMVESNVRTKGPVFFRGRTDLRSLLDQCLLLKPEQVIETIVDSRLRGRGGAGFSTGLKWRLCRDAESEQKYVICNADEGEPGTFKDRVLLTRAPKKVFVGMVIAAYAIGCRKGIVYLRGEYFYLKDYLERQLQELREDGLLGRAIGGRAGFDFDIRIQMGAGAYICGDESALIESCEGKRGTPRVKPPFPVQQGYLGKPTSVNNVETFAAVSRIMEEGADWFRAMGTPDSAGTRLLSVAGDCSKPGIYEVEWGVTLNEVLAMVGARDARAVQISGPSGECVSVAKDGERKLAYEDLSCNGAFTIFNCKRDLLEIVRDHMQFFVEESCGICVPCRAGNVDLHRKVEWVIAGKACQKDLDDMVSWGALVRRTSRCGLGATSPKPILTTLEKFPEIYQNKLVRHEGPLLPSFDLDTALGGYEKALKDLEEVTR.

219–228 (GRGGAGFSTG) serves as a coordination point for NAD(+). Residue 332–379 (GAGAYICGDESALIESCEGKRGTPRVKPPFPVQQGYLGKPTSVNNVET) participates in FMN binding. The [4Fe-4S] cluster site is built by Cys-499, Cys-502, Cys-505, and Cys-545.

The protein belongs to the complex I 51 kDa subunit family. As to quaternary structure, tetramer of an alpha and a gamma subunits (flavin-containing dimer), and a delta and a nickel-containing beta subunit (hydrogenase dimer). Requires FMN as cofactor. It depends on [4Fe-4S] cluster as a cofactor.

The protein localises to the cytoplasm. The catalysed reaction is H2 + NAD(+) = NADH + H(+). Functionally, subunits alpha and gamma of HoxS constitute an NADH--oxidoreductase. This chain is NAD-reducing hydrogenase HoxS subunit alpha (hoxF), found in Cupriavidus necator (strain ATCC 17699 / DSM 428 / KCTC 22496 / NCIMB 10442 / H16 / Stanier 337) (Ralstonia eutropha).